The chain runs to 661 residues: Protein WHI3 (661 aa).

The span at A14 to S31 shows a compositional bias: low complexity. Positions A14–E58 are disordered. Positions P32–S44 are enriched in polar residues. S231 is subject to Phosphoserine. Composition is skewed to low complexity over residues D237–Q272, N383–S409, and K496–T508. Disordered regions lie at residues D237–S280, N383–Q410, E469–T508, and S613–N661. In terms of domain architecture, RRM spans N538–N625. Over residues G628–N647 the composition is skewed to low complexity. Over residues M648–N661 the composition is skewed to polar residues.

Its function is as follows. Involved in size control and cell cycle. This is Protein WHI3 (WHI3) from Saccharomyces cerevisiae (strain ATCC 204508 / S288c) (Baker's yeast).